The chain runs to 354 residues: DNA polymerase IV (354 aa).

In terms of domain architecture, UmuC spans I6–G187. D10 and D105 together coordinate Mg(2+). E106 is an active-site residue.

Belongs to the DNA polymerase type-Y family. In terms of assembly, monomer. Mg(2+) is required as a cofactor.

It is found in the cytoplasm. The catalysed reaction is DNA(n) + a 2'-deoxyribonucleoside 5'-triphosphate = DNA(n+1) + diphosphate. Functionally, poorly processive, error-prone DNA polymerase involved in untargeted mutagenesis. Copies undamaged DNA at stalled replication forks, which arise in vivo from mismatched or misaligned primer ends. These misaligned primers can be extended by PolIV. Exhibits no 3'-5' exonuclease (proofreading) activity. May be involved in translesional synthesis, in conjunction with the beta clamp from PolIII. In Pseudomonas putida (strain GB-1), this protein is DNA polymerase IV.